A 198-amino-acid chain; its full sequence is MAEKQTAKRNRREEILQSLALMLESSDGSQRITTAKLAASVGVSEAALYRHFPSKTRMFDSLIEFIEDSLITRINLILKDEKDTTARLRLIVLLILGFGERNPGLTRIMTGHALMFEQDKLQGRINQLFERIEAQLRQVLREKKMREGEGYTTDENVLAGQLLAFCEGMLSRFVRSEFKYRPTDDFDTRWPLVAAQLQ.

The HTH tetR-type domain occupies 10–70 (NRREEILQSL…SLIEFIEDSL (61 aa)). Residues 33 to 52 (TTAKLAASVGVSEAALYRHF) constitute a DNA-binding region (H-T-H motif). The stretch at 117 to 145 (EQDKLQGRINQLFERIEAQLRQVLREKKM) forms a coiled coil.

This sequence belongs to the nucleoid occlusion factor SlmA family. Homodimer. Interacts with FtsZ.

It is found in the cytoplasm. Its subcellular location is the nucleoid. Functionally, required for nucleoid occlusion (NO) phenomenon, which prevents Z-ring formation and cell division over the nucleoid. Acts as a DNA-associated cell division inhibitor that binds simultaneously chromosomal DNA and FtsZ, and disrupts the assembly of FtsZ polymers. SlmA-DNA-binding sequences (SBS) are dispersed on non-Ter regions of the chromosome, preventing FtsZ polymerization at these regions. This is Nucleoid occlusion factor SlmA from Enterobacter sp. (strain 638).